The primary structure comprises 298 residues: Cyclin-dependent kinase 2 (298 aa).

Positions 4–286 (FQKVEKIGEG…AKNALVHRFF (283 aa)) constitute a Protein kinase domain. Residues 10–18 (IGEGTYGVV), lysine 33, 81–83 (EFL), and aspartate 86 each bind ATP. Threonine 14 carries the post-translational modification Phosphothreonine. Tyrosine 15 is modified (phosphotyrosine). The Proton acceptor role is filled by aspartate 127. Residues 129–132 (KPQN) and aspartate 145 each bind ATP. The residue at position 160 (threonine 160) is a Phosphothreonine; by CAK.

It belongs to the protein kinase superfamily. CMGC Ser/Thr protein kinase family. CDC2/CDKX subfamily.

It catalyses the reaction L-seryl-[protein] + ATP = O-phospho-L-seryl-[protein] + ADP + H(+). The enzyme catalyses L-threonyl-[protein] + ATP = O-phospho-L-threonyl-[protein] + ADP + H(+). Phosphorylation at Thr-14 or Tyr-15 inactivates the enzyme, while phosphorylation at Thr-160 activates it. Serine/threonine-protein kinase involved in the control of the cell cycle; essential for meiosis, but dispensable for mitosis. Triggers duplication of centrosomes and DNA. Acts at the G1-S transition to promote the E2F transcriptional program and the initiation of DNA synthesis, and modulates G2 progression; controls the timing of entry into mitosis/meiosis by controlling the subsequent activation of cyclin B/CDK1 by phosphorylation, and coordinates the activation of cyclin B/CDK1 at the centrosome and in the nucleus. Crucial role in orchestrating a fine balance between cellular proliferation, cell death, and DNA repair in embryonic stem cells (ESCs). Activity of CDK2 is maximal during S phase and G2; activated by interaction with cyclin E during the early stages of DNA synthesis to permit G1-S transition, and subsequently activated by cyclin A2 (cyclin A1 in germ cells) during the late stages of DNA replication to drive the transition from S phase to mitosis, the G2 phase. The chain is Cyclin-dependent kinase 2 (cdk2) from Carassius auratus (Goldfish).